Consider the following 350-residue polypeptide: GTPase Obg (350 aa).

Positions 1–159 (MKLVDEAEIE…RTLKLELKLL (159 aa)) constitute an Obg domain. Residues 126–147 (GNMHFKSSTNRSPRQALPGEPG) are disordered. The OBG-type G domain maps to 160–337 (ADVGLLGFPN…IMSRIMAFFD (178 aa)). GTP contacts are provided by residues 166-173 (GFPNAGKS), 191-195 (FTTLY), 213-216 (DIPG), 287-290 (NKAD), and 318-320 (SAL). Ser173 and Thr193 together coordinate Mg(2+).

The protein belongs to the TRAFAC class OBG-HflX-like GTPase superfamily. OBG GTPase family. In terms of assembly, monomer. Requires Mg(2+) as cofactor.

The protein resides in the cytoplasm. An essential GTPase which binds GTP, GDP and possibly (p)ppGpp with moderate affinity, with high nucleotide exchange rates and a fairly low GTP hydrolysis rate. Plays a role in control of the cell cycle, stress response, ribosome biogenesis and in those bacteria that undergo differentiation, in morphogenesis control. The chain is GTPase Obg from Stenotrophomonas maltophilia (strain K279a).